An 88-amino-acid chain; its full sequence is uncharacterized protein (88 aa).

The next 2 helical transmembrane spans lie at leucine 27–histidine 46 and serine 61–isoleucine 83.

It localises to the membrane. This is an uncharacterized protein from Saccharomyces cerevisiae (strain ATCC 204508 / S288c) (Baker's yeast).